Consider the following 561-residue polypeptide: Sensor histidine kinase BtsS (561 aa).

Residues 1–3 (MYD) lie on the Cytoplasmic side of the membrane. The chain crosses the membrane as a helical span at residues 4 to 24 (FNLVLLLLQQMCVFLVIAWLM). The Periplasmic segment spans residues 25–43 (SKTPLFIPLMQVTVRLPHK). Residues 44–64 (FLCYIVFSIFCIMGTWFGLHI) traverse the membrane as a helical segment. At 65 to 72 (DDSIANTR) the chain is on the cytoplasmic side. The chain crosses the membrane as a helical span at residues 73-93 (AIGAVMGGLLGGPVVGGLVGL). Topologically, residues 94–108 (TGGLHRYSMGGMTAL) are periplasmic. A helical membrane pass occupies residues 109-129 (SCMISTIVEGLLGGLVHSILI). At 130-140 (RRGRTDKVFNP) the chain is on the cytoplasmic side. The chain crosses the membrane as a helical span at residues 141-161 (ITAGAVTFVAEMVQMLIILAI). The Periplasmic portion of the chain corresponds to 162-170 (ARPYEDAVR). Residues 171-191 (LVSNIAAPMMVTNTVGAALFM) form a helical membrane-spanning segment. Residues 192–561 (RILLDKRAMF…TLRLPWRDEA (370 aa)) lie on the Cytoplasmic side of the membrane. One can recognise a Histidine kinase domain in the interval 354-559 (QILAGQYERQ…RITLRLPWRD (206 aa)).

In terms of processing, autophosphorylated.

Its subcellular location is the cell inner membrane. It carries out the reaction ATP + protein L-histidine = ADP + protein N-phospho-L-histidine.. Member of the two-component regulatory system BtsS/BtsR. BtsS is a high-affinity receptor for extracellular pyruvate that activates BtsR by phosphorylation. The sequence is that of Sensor histidine kinase BtsS from Escherichia coli O6:H1 (strain CFT073 / ATCC 700928 / UPEC).